The primary structure comprises 414 residues: Serine hydroxymethyltransferase (414 aa).

Residues Leu121 and 125 to 127 (GHL) each bind (6S)-5,6,7,8-tetrahydrofolate. At Lys229 the chain carries N6-(pyridoxal phosphate)lysine.

The protein belongs to the SHMT family. Homodimer. It depends on pyridoxal 5'-phosphate as a cofactor.

Its subcellular location is the cytoplasm. The enzyme catalyses (6R)-5,10-methylene-5,6,7,8-tetrahydrofolate + glycine + H2O = (6S)-5,6,7,8-tetrahydrofolate + L-serine. The protein operates within one-carbon metabolism; tetrahydrofolate interconversion. Its pathway is amino-acid biosynthesis; glycine biosynthesis; glycine from L-serine: step 1/1. Functionally, catalyzes the reversible interconversion of serine and glycine with tetrahydrofolate (THF) serving as the one-carbon carrier. This reaction serves as the major source of one-carbon groups required for the biosynthesis of purines, thymidylate, methionine, and other important biomolecules. Also exhibits THF-independent aldolase activity toward beta-hydroxyamino acids, producing glycine and aldehydes, via a retro-aldol mechanism. The protein is Serine hydroxymethyltransferase of Polaromonas naphthalenivorans (strain CJ2).